The primary structure comprises 536 residues: Ribulokinase (536 aa).

It belongs to the ribulokinase family.

The enzyme catalyses D-ribulose + ATP = D-ribulose 5-phosphate + ADP + H(+). The catalysed reaction is L-ribulose + ATP = L-ribulose 5-phosphate + ADP + H(+). The protein operates within carbohydrate degradation; L-arabinose degradation via L-ribulose; D-xylulose 5-phosphate from L-arabinose (bacterial route): step 2/3. This Staphylococcus epidermidis (strain ATCC 35984 / DSM 28319 / BCRC 17069 / CCUG 31568 / BM 3577 / RP62A) protein is Ribulokinase.